Here is a 246-residue protein sequence, read N- to C-terminus: MAGHSKWANIQHRKGRQDAARSKLFSKLSKEITVAAKMGDPDPEKNPRLRLAVKEAKSNSVPKDVIDRAIKKATGGDAENYDEIRYEGYGPNGVAVIVETMTDNKNRTASTVRSTFSKNGGNLGETGSVGFMFERKGEVTYPASVGDADTVMMAAIEAGAEDVESSEDGHVIFCADTDLNEVSNALEAELGESESTKLIWKPTTTTELDLEGMQKLMKLVDALEDDDDVQRVTTNFEASDEVMAQL.

The disordered stretch occupies residues 1–21 (MAGHSKWANIQHRKGRQDAAR).

The protein belongs to the TACO1 family.

Its subcellular location is the cytoplasm. The sequence is that of Probable transcriptional regulatory protein TM1040_1893 from Ruegeria sp. (strain TM1040) (Silicibacter sp.).